Here is a 918-residue protein sequence, read N- to C-terminus: Cell cycle and apoptosis regulator protein 2 (918 aa).

Positions 1-35 (MSQFKRQRINPLPGGRNFSGTASTSLLGPPPGLLT) are disordered. A Phosphothreonine modification is found at T35. K112 bears the N6-acetyllysine; by KAT8 mark. Position 123 is an N6-methyllysine (K123). S124 is subject to Phosphoserine. Disordered regions lie at residues 179–219 (NRFP…KPRH), 446–510 (KAAE…PAVI), and 568–637 (VSPP…ASED). An Omega-N-methylarginine modification is found at R180. Residue K215 is modified to N6-acetyllysine; by KAT8. 2 stretches are compositionally biased toward low complexity: residues 447–468 (AAEA…EQAP) and 482–492 (AETPEATTQQE). The residue at position 454 (T454) is a Phosphothreonine; by ATM, ATR and CK2. T484 carries the post-translational modification Phosphothreonine. Position 569 is a phosphoserine (S569). The span at 572-597 (EPEKEEAAKEEEAIKEEVVKEPKDEA) shows a compositional bias: basic and acidic residues. K586 participates in a covalent cross-link: Glycyl lysine isopeptide (Lys-Gly) (interchain with G-Cter in SUMO2 and SUMO3); alternate. A Glycyl lysine isopeptide (Lys-Gly) (interchain with G-Cter in SUMO2); alternate cross-link involves residue K586. The interval 605–665 (ESEAPLKEDG…EEFAGAKLED (61 aa)) is interaction with MCC. S622, S670, S673, S676, S682, and S803 each carry phosphoserine. The interval 699–918 (DCLLAFVFFD…VEKEEPAPSN (220 aa)) is interaction with NR1D1. A coiled-coil region spans residues 824–904 (LENRIHTLEL…QLEIQRVVEK (81 aa)). Position 892 is a phosphothreonine (T892).

In terms of assembly, component of the DBIRD complex. Interacts with ZNF326/ZIRD; the interaction is direct. Interacts (via N-terminus) with SIRT1, which inhibits the deacetylation of substrates. Interacts (via N-terminus) with SUV39H1; this interaction abolishes the interaction with SIRT1. Component of a nuclear receptor-mediated transcription complex composed of at least ZNF335, CCAR2 and EMSY; the complex stimulates the transcription of nuclear receptor target genes such as SOX9 and HOXA1. Within the complex interacts with EMSY and interacts with ZNF335 (via C-terminus). Components of this complex may associate with components of a histone methylation complex to form a complex at least composed of ZNF335, HCFC1, CCAR2, EMSY, MKI67, RBBP5, ASH2L and WDR5. Within this complex, interacts with ASH2L. Interacts with NR1D1. Interacts (via N-terminus) with ESR1 and ESR2. Interacts (via N-terminus) with HDAC3 (via C-terminus). Interacts with HDAC1 and MED2F. Interacts with MCC. Interacts (via N-terminus) with NR1H2 and NR1H3 in a ligand-independent manner. Interacts with CSNK2A1. Interacts (via N-terminus) with p53/TP53. Interacts (via N-terminus) with BRCA1 (via the BRCT domains). Interacts (via N-terminus) with CHEK2 (via protein kinase domain). Interacts with PSEM3. Interacts (via N-terminus) with PSIA3 and SENP1. The sumoylated form shows a preferential interaction with SIRT1 as compared to its unmodified form. Interacts with CECR2; may form part of the CERF-1 and/or CEF-5 ISWI chromatin remodeling complexes in embryonic stem cells. In terms of processing, ATM/ATR-mediated phosphorylation at Thr-454 upon DNA damage promotes binding to SIRT1. Phosphorylation at Thr-454 promotes its sumoylation by switching the binding partner of CCAR2 from SENP1 to PIAS3. Post-translationally, acetylation at Lys-112 and Lys-215 by KAT8 prevents inhibitory binding to SIRT1 and increases its deacetylase activity. Genotoxic stress induces its sumoylation and sumoylation promotes the SIRT1-CCAR2 interaction which in turn inhibits SIRT1-mediated deacetylation of p53/TP53. Sumoylation leads to transcriptional activation of p53/TP53 by sequestering SIRT1 from p53/TP53. Desumoylated by SENP1.

The protein localises to the nucleus. It localises to the cytoplasm. Its subcellular location is the cytoskeleton. It is found in the spindle. Core component of the DBIRD complex, a multiprotein complex that acts at the interface between core mRNP particles and RNA polymerase II (RNAPII) and integrates transcript elongation with the regulation of alternative splicing: the DBIRD complex affects local transcript elongation rates and alternative splicing of a large set of exons embedded in (A + T)-rich DNA regions. Inhibits SIRT1 deacetylase activity leading to increasing levels of p53/TP53 acetylation and p53-mediated apoptosis. Inhibits SUV39H1 methyltransferase activity. Mediates ligand-dependent transcriptional activation by nuclear hormone receptors. Plays a critical role in maintaining genomic stability and cellular integrity following UV-induced genotoxic stress. Regulates the circadian expression of the core clock components NR1D1 and BMAL1. Enhances the transcriptional repressor activity of NR1D1 through stabilization of NR1D1 protein levels by preventing its ubiquitination and subsequent degradation. Represses the ligand-dependent transcriptional activation function of ESR2. Acts as a regulator of PCK1 expression and gluconeogenesis by a mechanism that involves, at least in part, both NR1D1 and SIRT1. Negatively regulates the deacetylase activity of HDAC3 and can alter its subcellular localization. Positively regulates the beta-catenin pathway (canonical Wnt signaling pathway) and is required for MCC-mediated repression of the beta-catenin pathway. Represses ligand-dependent transcriptional activation function of NR1H2 and NR1H3 and inhibits the interaction of SIRT1 with NR1H3. Plays an important role in tumor suppression through p53/TP53 regulation; stabilizes p53/TP53 by affecting its interaction with ubiquitin ligase MDM2. Represses the transcriptional activator activity of BRCA1. Inhibits SIRT1 in a CHEK2 and PSEM3-dependent manner and inhibits the activity of CHEK2 in vitro. This Pongo abelii (Sumatran orangutan) protein is Cell cycle and apoptosis regulator protein 2 (CCAR2).